A 194-amino-acid chain; its full sequence is Oligoribonuclease (194 aa).

An Exonuclease domain is found at 11–174 (LIWIDLEMTG…SDVRDSINEL (164 aa)). Tyr-132 is a catalytic residue.

It belongs to the oligoribonuclease family.

The protein localises to the cytoplasm. In terms of biological role, 3'-to-5' exoribonuclease specific for small oligoribonucleotides. The polypeptide is Oligoribonuclease (Xanthomonas oryzae pv. oryzae (strain MAFF 311018)).